A 190-amino-acid chain; its full sequence is HTH-type transcriptional repressor CutR (190 aa).

Residues 3-58 enclose the HTH deoR-type domain; that stretch reads PINRQQHILKWLKEEGSLRISDISARFGVSEMTVYRDVNQLVQSNQVIKTAGGITL. Residues 20–39 constitute a DNA-binding region (H-T-H motif); it reads LRISDISARFGVSEMTVYRD.

It is found in the cytoplasm. Its function is as follows. May act as a negative transcriptional regulator of cutJ/ycnJ in the presence of copper. May use copper as a corepressor. This is HTH-type transcriptional repressor CutR from Bacillus subtilis (strain 168).